Consider the following 238-residue polypeptide: MAGHSKWANTKYRKERADHKRGKIFSRTIKELISAVKMGGPDPKTNARLRVIIQKAKDQNIPSENIERNLKKASSADQKNFEDVTYELYGYGGVGIIVEAMTDNKNRTASDMRIAVNKRGGSLVEPGSVLYNFSRKGACYVPKNSIDEAALLSHVIEVGAEDLDNDDEEHFVVLCDPVDLSSVKEQLVALGVTCTEEKLIYVPLRVVDCDEKDGEANLALIEWLEKIDDVDEVYHNMA.

Belongs to the TACO1 family.

Its subcellular location is the cytoplasm. The chain is Probable transcriptional regulatory protein CF0838 from Chlamydia felis (strain Fe/C-56) (Chlamydophila felis).